Consider the following 379-residue polypeptide: UDP-4-amino-4-deoxy-L-arabinose--oxoglutarate aminotransferase (379 aa).

Residue Lys182 is modified to N6-(pyridoxal phosphate)lysine.

This sequence belongs to the DegT/DnrJ/EryC1 family. ArnB subfamily. In terms of assembly, homodimer. Pyridoxal 5'-phosphate serves as cofactor.

The catalysed reaction is UDP-4-amino-4-deoxy-beta-L-arabinose + 2-oxoglutarate = UDP-beta-L-threo-pentopyranos-4-ulose + L-glutamate. The protein operates within nucleotide-sugar biosynthesis; UDP-4-deoxy-4-formamido-beta-L-arabinose biosynthesis; UDP-4-deoxy-4-formamido-beta-L-arabinose from UDP-alpha-D-glucuronate: step 2/3. Its pathway is bacterial outer membrane biogenesis; lipopolysaccharide biosynthesis. Its function is as follows. Catalyzes the conversion of UDP-4-keto-arabinose (UDP-Ara4O) to UDP-4-amino-4-deoxy-L-arabinose (UDP-L-Ara4N). The modified arabinose is attached to lipid A and is required for resistance to polymyxin and cationic antimicrobial peptides. The polypeptide is UDP-4-amino-4-deoxy-L-arabinose--oxoglutarate aminotransferase (Shigella boydii serotype 4 (strain Sb227)).